The following is a 204-amino-acid chain: MYCLLATPLCLLSLLLPPLSPAAPISPSEPIGQAYSLALYMQKNTSALLQTYLQHQGSPFSDPGFSAPELQLSTLPSAAVSFKTWHAMEDAERLSRAQGAFLALTQHLQLVGDDQSYLNPGSPILLAQLGAARLRAQGLLGNMAAIMTALGLPIPPEEDTLGFVPFGASAFERKCRGYIVTREYGHWTDRAVRDLALLKAKYSA.

The first 22 residues, 1–22 (MYCLLATPLCLLSLLLPPLSPA), serve as a signal peptide directing secretion. Asn-44 carries an N-linked (GlcNAc...) asparagine glycan.

This sequence belongs to the IL-6 superfamily. Binds to tripartite CNTF receptor complex consisting of CNTF alpha chain, LIFR and IL6ST (in vitro). As to expression, not detected in adult tissues.

The protein resides in the secreted. In terms of biological role, increases the platelet count associated with splenomegaly. May have an important role in neuronal precursor development and maturation. This is Cardiotrophin-2 (Ctf2) from Mus musculus (Mouse).